Reading from the N-terminus, the 293-residue chain is Nucleotide-binding protein BCQ_4976 (293 aa).

Residue G14–T21 participates in ATP binding. D65–G68 contacts GTP.

Belongs to the RapZ-like family.

In terms of biological role, displays ATPase and GTPase activities. In Bacillus cereus (strain Q1), this protein is Nucleotide-binding protein BCQ_4976.